The primary structure comprises 125 residues: UPF0231 protein APP7_1023 (125 aa).

Belongs to the UPF0231 family.

This is UPF0231 protein APP7_1023 from Actinobacillus pleuropneumoniae serotype 7 (strain AP76).